The following is a 183-amino-acid chain: MLILASSSISRANLLKTAKIDFRQVSFDYDENLDKNISPFLYVQKIVLEKERQFLSTLGKDFQNQNLLFADSIVCIDEKILTKAKDKKEAYEMLALQNGKYASILSAFLLVKPEKRVFSLSKTTLYFKNFDENALRDYVENDLYKGKAGCIMCEGFHQNFITHQVGNLSTALGLDIQTLKAYL.

Asp-71 functions as the Proton acceptor in the catalytic mechanism.

This sequence belongs to the Maf family. The cofactor is a divalent metal cation.

The protein resides in the cytoplasm. The catalysed reaction is a ribonucleoside 5'-triphosphate + H2O = a ribonucleoside 5'-phosphate + diphosphate + H(+). It carries out the reaction a 2'-deoxyribonucleoside 5'-triphosphate + H2O = a 2'-deoxyribonucleoside 5'-phosphate + diphosphate + H(+). Nucleoside triphosphate pyrophosphatase. May have a dual role in cell division arrest and in preventing the incorporation of modified nucleotides into cellular nucleic acids. The sequence is that of Nucleoside triphosphate pyrophosphatase from Campylobacter jejuni subsp. jejuni serotype O:6 (strain 81116 / NCTC 11828).